A 66-amino-acid polypeptide reads, in one-letter code: Disintegrin EO5B (66 aa).

Positions 1–65 (NSAHPCCDPV…DCPRNPYKGK (65 aa)) constitute a Disintegrin domain. Disulfide bonds link Cys-6–Cys-29, Cys-20–Cys-26, Cys-25–Cys-50, and Cys-38–Cys-57. The short motif at 42–44 (VGD) is the Cell attachment site; atypical (VGD) element.

Belongs to the disintegrin family. Dimeric disintegrin subfamily. As to quaternary structure, heterodimer with EO4A or EO5A; disulfide-linked. Expressed by the venom gland.

It localises to the secreted. Poor inhibitor of platelet aggregation. When it dimerizes with EO4A, it inhibits the adhesion of cells expressing the RGD-dependent integrin alpha-5/beta-1 (ITGA5/ITGB1) to immobilized fibronectin. When it dimerizes with EO5A, it inhibits the adhesion of the alpha-4/beta-1 (ITGA4/ITGB1) integrin to VCAM-1. When it dimerizes either with EO4A or EO5A, the inhibition on alpha-IIb/beta-3 (ITGA2B/ITGB3) is low. The sequence is that of Disintegrin EO5B from Echis ocellatus (Ocellated saw-scaled viper).